Reading from the N-terminus, the 208-residue chain is Recombination protein RecR (208 aa).

Residues 57 to 72 form a C4-type zinc finger; it reads CALCNTLTEQEVCVTC. One can recognise a Toprim domain in the interval 80-187; sequence SKLCVVETPA…QVTRLARGVP (108 aa).

Belongs to the RecR family.

Its function is as follows. May play a role in DNA repair. It seems to be involved in an RecBC-independent recombinational process of DNA repair. It may act with RecF and RecO. The polypeptide is Recombination protein RecR (Polaromonas naphthalenivorans (strain CJ2)).